Consider the following 211-residue polypeptide: Pyridoxine/pyridoxamine 5'-phosphate oxidase (211 aa).

Residues 7-10 (RTDY) and Lys-65 contribute to the substrate site. FMN contacts are provided by residues 60 to 65 (RIVLIK), 75 to 76 (FT), Arg-81, and Lys-82. Substrate is bound by residues Tyr-122, Arg-126, and Ser-130. FMN contacts are provided by residues 139–140 (QS) and Trp-183. 189–191 (RLH) contacts substrate. Residue Arg-193 participates in FMN binding.

Belongs to the pyridoxamine 5'-phosphate oxidase family. Homodimer. FMN is required as a cofactor.

The enzyme catalyses pyridoxamine 5'-phosphate + O2 + H2O = pyridoxal 5'-phosphate + H2O2 + NH4(+). It carries out the reaction pyridoxine 5'-phosphate + O2 = pyridoxal 5'-phosphate + H2O2. The protein operates within cofactor metabolism; pyridoxal 5'-phosphate salvage; pyridoxal 5'-phosphate from pyridoxamine 5'-phosphate: step 1/1. It participates in cofactor metabolism; pyridoxal 5'-phosphate salvage; pyridoxal 5'-phosphate from pyridoxine 5'-phosphate: step 1/1. Catalyzes the oxidation of either pyridoxine 5'-phosphate (PNP) or pyridoxamine 5'-phosphate (PMP) into pyridoxal 5'-phosphate (PLP). This chain is Pyridoxine/pyridoxamine 5'-phosphate oxidase, found in Herminiimonas arsenicoxydans.